Consider the following 542-residue polypeptide: Chaperonin GroEL (542 aa).

Residues 29–32 (TLGP), 86–90 (DGTTT), Gly-413, 476–478 (NAA), and Asp-492 contribute to the ATP site.

It belongs to the chaperonin (HSP60) family. Forms a cylinder of 14 subunits composed of two heptameric rings stacked back-to-back. Interacts with the co-chaperonin GroES.

Its subcellular location is the cytoplasm. It carries out the reaction ATP + H2O + a folded polypeptide = ADP + phosphate + an unfolded polypeptide.. Together with its co-chaperonin GroES, plays an essential role in assisting protein folding. The GroEL-GroES system forms a nano-cage that allows encapsulation of the non-native substrate proteins and provides a physical environment optimized to promote and accelerate protein folding. This is Chaperonin GroEL from Lactococcus lactis subsp. cremoris (strain SK11).